The following is a 26-amino-acid chain: Bifunctional protein PutA (26 aa).

Residues 1 to 26 (MGTTTMGVKLDDATRERIKSAASRID) are disordered. The segment covering 9 to 26 (KLDDATRERIKSAASRID) has biased composition (basic and acidic residues).

It depends on FAD as a cofactor.

It catalyses the reaction L-proline + a quinone = (S)-1-pyrroline-5-carboxylate + a quinol + H(+). The catalysed reaction is L-glutamate 5-semialdehyde + NAD(+) + H2O = L-glutamate + NADH + 2 H(+). It participates in amino-acid degradation; L-proline degradation into L-glutamate; L-glutamate from L-proline: step 1/2. The protein operates within amino-acid degradation; L-proline degradation into L-glutamate; L-glutamate from L-proline: step 2/2. Its function is as follows. Oxidizes proline to glutamate for use as a carbon and nitrogen source and also function as a transcriptional repressor of the put operon. This Klebsiella pneumoniae protein is Bifunctional protein PutA (putA).